The following is a 127-amino-acid chain: Fluoride-specific ion channel FluC (127 aa).

4 consecutive transmembrane segments (helical) span residues Ile-4–Ala-24, Phe-34–Phe-54, Phe-65–Leu-85, and Phe-97–Leu-117. The Na(+) site is built by Gly-77 and Thr-80.

The protein belongs to the fluoride channel Fluc/FEX (TC 1.A.43) family.

It is found in the cell inner membrane. The catalysed reaction is fluoride(in) = fluoride(out). Na(+) is not transported, but it plays an essential structural role and its presence is essential for fluoride channel function. Its function is as follows. Fluoride-specific ion channel. Important for reducing fluoride concentration in the cell, thus reducing its toxicity. The polypeptide is Fluoride-specific ion channel FluC (Bacteroides fragilis (strain ATCC 25285 / DSM 2151 / CCUG 4856 / JCM 11019 / LMG 10263 / NCTC 9343 / Onslow / VPI 2553 / EN-2)).